The chain runs to 204 residues: Large ribosomal subunit protein uL4 (204 aa).

Positions 44-76 are disordered; it reads KRQGTQSAKTRSEVRGGGIKPWRQKGTGRARQG.

Belongs to the universal ribosomal protein uL4 family. In terms of assembly, part of the 50S ribosomal subunit.

Its function is as follows. One of the primary rRNA binding proteins, this protein initially binds near the 5'-end of the 23S rRNA. It is important during the early stages of 50S assembly. It makes multiple contacts with different domains of the 23S rRNA in the assembled 50S subunit and ribosome. In terms of biological role, forms part of the polypeptide exit tunnel. The chain is Large ribosomal subunit protein uL4 from Clostridium perfringens (strain 13 / Type A).